A 348-amino-acid polypeptide reads, in one-letter code: MNGTEGPNFYVPFSNKTGVVRSPFEYPQYYLAEPWQFSMLAAYMFLLIVLGFPINFLTLYVTVQHKKLRTPLNYILLNLAVADLFMVFGGFTTTLYTSLHGYFVFGPTGCNVEGFFATLGGEIALWSLVVLAIERYVVVCKPMSNFRFGENHAIMGVAFTWVMALACAAPPLAGWSRYIPEGMQCSCGIDYYTLKPEVNNESFVIYMFVVHFTIPMIVIFFCYGQLVFTVKEAAAQQQESATTQKAEKEVTRMVIIMVIAFLICWVPYASVAFYIFTHQGSNFGPIFMTLPAFFAKSASIYNPVIYIMMNKQFRNCMLTTICCGKNPFAEEEGATTVSKTETSQVAPA.

Methionine 1 is subject to N-acetylmethionine. Residues 1–36 lie on the Extracellular side of the membrane; it reads MNGTEGPNFYVPFSNKTGVVRSPFEYPQYYLAEPWQ. Residues asparagine 2 and asparagine 15 are each glycosylated (N-linked (GlcNAc...) asparagine). The helical transmembrane segment at 37 to 61 threads the bilayer; the sequence is FSMLAAYMFLLIVLGFPINFLTLYV. At 62–73 the chain is on the cytoplasmic side; sequence TVQHKKLRTPLN. Residues 74-96 form a helical membrane-spanning segment; the sequence is YILLNLAVADLFMVFGGFTTTLY. At 97–110 the chain is on the extracellular side; it reads TSLHGYFVFGPTGC. Residues cysteine 110 and cysteine 187 are joined by a disulfide bond. The chain crosses the membrane as a helical span at residues 111–133; the sequence is NVEGFFATLGGEIALWSLVVLAI. The short motif at 134 to 136 is the 'Ionic lock' involved in activated form stabilization element; it reads ERY. Residues 134 to 152 lie on the Cytoplasmic side of the membrane; the sequence is ERYVVVCKPMSNFRFGENH. A helical transmembrane segment spans residues 153-173; it reads AIMGVAFTWVMALACAAPPLA. The Extracellular segment spans residues 174-202; that stretch reads GWSRYIPEGMQCSCGIDYYTLKPEVNNES. Residue glutamate 201 coordinates Zn(2+). Residues 203-224 traverse the membrane as a helical segment; that stretch reads FVIYMFVVHFTIPMIVIFFCYG. Over 225–252 the chain is Cytoplasmic; it reads QLVFTVKEAAAQQQESATTQKAEKEVTR. Residues 253–274 traverse the membrane as a helical segment; that stretch reads MVIIMVIAFLICWVPYASVAFY. Residues 275–286 are Extracellular-facing; it reads IFTHQGSNFGPI. A Zn(2+)-binding site is contributed by glutamine 279. Residues 287 to 308 traverse the membrane as a helical segment; the sequence is FMTLPAFFAKSASIYNPVIYIM. An N6-(retinylidene)lysine modification is found at lysine 296. Residues 309–348 lie on the Cytoplasmic side of the membrane; the sequence is MNKQFRNCMLTTICCGKNPFAEEEGATTVSKTETSQVAPA. S-palmitoyl cysteine attachment occurs at residues cysteine 322 and cysteine 323. The segment at 330 to 348 is interaction with SAG; that stretch reads EEEGATTVSKTETSQVAPA. Phosphothreonine occurs at positions 335 and 336. Serine 338 is modified (phosphoserine). Phosphothreonine is present on residues threonine 340 and threonine 342. At serine 343 the chain carries Phosphoserine.

This sequence belongs to the G-protein coupled receptor 1 family. Opsin subfamily. In terms of assembly, homodimer. May form a complex composed of RHO, GRK1 and RCVRN in a Ca(2+)-dependent manner; RCVRN prevents the interaction between GRK1 and RHO. Interacts with GRK1. Interacts (phosphorylated form) with SAG. Interacts with GNAT1. Interacts with GNAT3. SAG and G-proteins compete for a common binding site. Interacts with PRCD; the interaction promotes PRCD stability. Forms a complex with ASAP1 and ARF4. Forms a complex with ASAP1, RAB11A, Rabin8/RAB3IP, ARF4 and RAB11FIP3; the complex regulates Golgi-to-cilia rhodopsin/RHO transport in photoreceptors. In terms of processing, phosphorylated on some or all of the serine and threonine residues present in the C-terminal region. Contains one covalently linked retinal chromophore. Upon light absorption, the covalently bound 11-cis-retinal is converted to all-trans-retinal. After hydrolysis of the Schiff base and release of the covalently bound all-trans-retinal, active rhodopsin is regenerated by binding of a fresh molecule of 11-cis-retinal.

The protein resides in the membrane. The protein localises to the cell projection. It localises to the cilium. Its subcellular location is the photoreceptor outer segment. Photoreceptor required for image-forming vision at low light intensity. Required for photoreceptor cell viability after birth. Light-induced isomerization of 11-cis to all-trans retinal triggers a conformational change that activates signaling via G-proteins. Subsequent receptor phosphorylation mediates displacement of the bound G-protein alpha subunit by the arrestin SAG and terminates signaling. The protein is Rhodopsin (RHO) of Trichechus manatus (Caribbean manatee).